A 117-amino-acid chain; its full sequence is Large ribosomal subunit protein uL18 (117 aa).

Belongs to the universal ribosomal protein uL18 family. Part of the 50S ribosomal subunit; part of the 5S rRNA/L5/L18/L25 subcomplex. Contacts the 5S and 23S rRNAs.

This is one of the proteins that bind and probably mediate the attachment of the 5S RNA into the large ribosomal subunit, where it forms part of the central protuberance. The chain is Large ribosomal subunit protein uL18 from Halorhodospira halophila (strain DSM 244 / SL1) (Ectothiorhodospira halophila (strain DSM 244 / SL1)).